The chain runs to 440 residues: Xylose isomerase (440 aa).

Active-site residues include H100 and D103. Mg(2+) is bound by residues E231, E267, H270, D295, D306, D308, and D338.

Belongs to the xylose isomerase family. As to quaternary structure, homotetramer. Requires Mg(2+) as cofactor.

The protein localises to the cytoplasm. It carries out the reaction alpha-D-xylose = alpha-D-xylulofuranose. This is Xylose isomerase from Burkholderia vietnamiensis (strain G4 / LMG 22486) (Burkholderia cepacia (strain R1808)).